The sequence spans 430 residues: DNA repair protein recA homolog 3, mitochondrial (430 aa).

The transit peptide at 1–35 directs the protein to the mitochondrion; it reads MARILRNVYSLRSSLFSSELLRRSVVGTSFQLRGF. 119–126 contributes to the ATP binding site; sequence GPEASGKT. The segment at 385 to 415 is disordered; it reads DEAADKETESESEEEDSLRVVVSPDNTDDES.

It belongs to the RecA family.

The protein localises to the mitochondrion. Involved in recombination ability and DNA strand transfer activity. This Arabidopsis thaliana (Mouse-ear cress) protein is DNA repair protein recA homolog 3, mitochondrial.